The primary structure comprises 159 residues: 6,7-dimethyl-8-ribityllumazine synthase (159 aa).

Residues Phe22, 57 to 59 (TYE), and 81 to 83 (TII) contribute to the 5-amino-6-(D-ribitylamino)uracil site. (2S)-2-hydroxy-3-oxobutyl phosphate is bound at residue 86–87 (ST). His89 serves as the catalytic Proton donor. Residue Met114 coordinates 5-amino-6-(D-ribitylamino)uracil. Arg128 contacts (2S)-2-hydroxy-3-oxobutyl phosphate.

The protein belongs to the DMRL synthase family. In terms of assembly, forms an icosahedral capsid composed of 60 subunits, arranged as a dodecamer of pentamers.

It carries out the reaction (2S)-2-hydroxy-3-oxobutyl phosphate + 5-amino-6-(D-ribitylamino)uracil = 6,7-dimethyl-8-(1-D-ribityl)lumazine + phosphate + 2 H2O + H(+). It functions in the pathway cofactor biosynthesis; riboflavin biosynthesis; riboflavin from 2-hydroxy-3-oxobutyl phosphate and 5-amino-6-(D-ribitylamino)uracil: step 1/2. Its function is as follows. Catalyzes the formation of 6,7-dimethyl-8-ribityllumazine by condensation of 5-amino-6-(D-ribitylamino)uracil with 3,4-dihydroxy-2-butanone 4-phosphate. This is the penultimate step in the biosynthesis of riboflavin. This is 6,7-dimethyl-8-ribityllumazine synthase from Buchnera aphidicola subsp. Schizaphis graminum (strain Sg).